The following is a 259-amino-acid chain: Triosephosphate isomerase (259 aa).

10 to 12 lines the substrate pocket; the sequence is NWK. The active-site Electrophile is the histidine 102. Glutamate 172 acts as the Proton acceptor in catalysis. Substrate-binding positions include glycine 178, serine 218, and 239–240; that span reads GG.

This sequence belongs to the triosephosphate isomerase family. As to quaternary structure, homodimer.

It is found in the cytoplasm. The catalysed reaction is D-glyceraldehyde 3-phosphate = dihydroxyacetone phosphate. Its pathway is carbohydrate biosynthesis; gluconeogenesis. The protein operates within carbohydrate degradation; glycolysis; D-glyceraldehyde 3-phosphate from glycerone phosphate: step 1/1. In terms of biological role, involved in the gluconeogenesis. Catalyzes stereospecifically the conversion of dihydroxyacetone phosphate (DHAP) to D-glyceraldehyde-3-phosphate (G3P). The sequence is that of Triosephosphate isomerase from Leifsonia xyli subsp. xyli (strain CTCB07).